The primary structure comprises 699 residues: tRNA wybutosine-synthesizing protein 4 (699 aa).

S-adenosyl-L-methionine is bound by residues arginine 94, glycine 120, aspartate 151, 197–198, and glutamate 224; that span reads DL.

It belongs to the methyltransferase superfamily. LCMT family.

The enzyme catalyses 7-[(3S)-3-amino-3-carboxypropyl]wyosine(37) in tRNA(Phe) + S-adenosyl-L-methionine = 7-[(3S)-(3-amino-3-methoxycarbonyl)propyl]wyosine(37) in tRNA(Phe) + S-adenosyl-L-homocysteine. The catalysed reaction is 7-[(3S)-(3-amino-3-methoxycarbonyl)propyl]wyosine(37) in tRNA(Phe) + S-adenosyl-L-methionine + CO2 = wybutosine(37) in tRNA(Phe) + S-adenosyl-L-homocysteine + 2 H(+). Its pathway is tRNA modification; wybutosine-tRNA(Phe) biosynthesis. Functionally, probable S-adenosyl-L-methionine-dependent methyltransferase that acts as a component of the wybutosine biosynthesis pathway. Wybutosine is a hyper modified guanosine with a tricyclic base found at the 3'-position adjacent to the anticodon of eukaryotic phenylalanine tRNA. May methylate the carboxyl group of leucine residues to form alpha-leucine ester residues. The polypeptide is tRNA wybutosine-synthesizing protein 4 (PPM2) (Eremothecium gossypii (strain ATCC 10895 / CBS 109.51 / FGSC 9923 / NRRL Y-1056) (Yeast)).